The following is a 266-amino-acid chain: Apolipoprotein A-I (266 aa).

Positions 1-18 (MKAVVLTLAVLFLTGSQA) are cleaved as a signal peptide. 2 consecutive repeat copies span residues 67 to 88 (LKLL…EQIG) and 89 to 110 (PVTQ…QEMN). The tract at residues 67-266 (LKLLDNWDTL…DEATKKLNAQ (200 aa)) is 10 X approximate tandem repeats. A Methionine sulfoxide modification is found at M109. The stretch at 111-121 (KDLEEVKKKVQ) is one 3; half-length repeat. 5 consecutive repeat copies span residues 122–143 (PYLD…QKVA), 144–165 (PLGA…EKLS), 166–187 (PLGE…AQLA), 188–209 (PYSD…EGGG), and 210–231 (AALA…EKAK). The 9; half-length repeat unit spans residues 232–242 (PALEDLRQGLL). The stretch at 243–266 (PVLESFRTSLLAAVDEATKKLNAQ) is repeat 10.

It belongs to the apolipoprotein A1/A4/E family. In terms of assembly, homodimer. Interacts with APOA1BP and CLU. Component of a sperm activating protein complex (SPAP), consisting of APOA1, an immunoglobulin heavy chain, an immunoglobulin light chain and albumin. Interacts with NDRG1. Interacts with SCGB3A2. Interacts with NAXE and YJEFN3. Glycosylated. In terms of processing, palmitoylated. Post-translationally, phosphorylation sites are present in the extracellular medium.

It localises to the secreted. Participates in the reverse transport of cholesterol from tissues to the liver for excretion by promoting cholesterol efflux from tissues and by acting as a cofactor for the lecithin cholesterol acyltransferase (LCAT). As part of the SPAP complex, activates spermatozoa motility. This is Apolipoprotein A-I (APOA1) from Odobenus rosmarus divergens (Pacific walrus).